A 429-amino-acid polypeptide reads, in one-letter code: Glutamyl-tRNA reductase (429 aa).

Substrate-binding positions include 56 to 59 (TCNR), S119, 124 to 126 (EPQ), and Q130. Catalysis depends on C57, which acts as the Nucleophile. NADP(+) is bound at residue 199–204 (GAGEMI).

It belongs to the glutamyl-tRNA reductase family. In terms of assembly, homodimer.

The catalysed reaction is (S)-4-amino-5-oxopentanoate + tRNA(Glu) + NADP(+) = L-glutamyl-tRNA(Glu) + NADPH + H(+). It participates in porphyrin-containing compound metabolism; protoporphyrin-IX biosynthesis; 5-aminolevulinate from L-glutamyl-tRNA(Glu): step 1/2. Functionally, catalyzes the NADPH-dependent reduction of glutamyl-tRNA(Glu) to glutamate 1-semialdehyde (GSA). The chain is Glutamyl-tRNA reductase from Janthinobacterium sp. (strain Marseille) (Minibacterium massiliensis).